We begin with the raw amino-acid sequence, 149 residues long: Ribosomal RNA large subunit methyltransferase H (149 aa).

Residues Leu-71, Gly-98, and Leu-117–Leu-122 contribute to the S-adenosyl-L-methionine site.

It belongs to the RNA methyltransferase RlmH family. As to quaternary structure, homodimer.

Its subcellular location is the cytoplasm. It carries out the reaction pseudouridine(1915) in 23S rRNA + S-adenosyl-L-methionine = N(3)-methylpseudouridine(1915) in 23S rRNA + S-adenosyl-L-homocysteine + H(+). Specifically methylates the pseudouridine at position 1915 (m3Psi1915) in 23S rRNA. In Campylobacter jejuni subsp. jejuni serotype O:6 (strain 81116 / NCTC 11828), this protein is Ribosomal RNA large subunit methyltransferase H.